Here is a 753-residue protein sequence, read N- to C-terminus: LON peptidase N-terminal domain and RING finger protein 3 (753 aa).

The segment at 17 to 57 (GSNNLELAEPEEPGTSAAAGQSAAHPEEVTPEGSQALGAQE) is disordered. The TPR 1 repeat unit spans residues 72 to 105 (CKVLLTQADALASEGHLREALEVYRQLSERQQLV). An RING-type 1 zinc finger spans residues 159–197 (CKKCHGFLSDPVSLWCGHTFCKLCLERGRAADRRCALCG). TPR repeat units follow at residues 244–277 (ASQLRHEGNRLFREHQVEAALLKYNEAVRLAPND), 279–311 (LLYSNRSQIYFTLESHEDALHDAEIACKLRPMG), and 313–345 (KAHFRKAQALATLGKVKEALKEFLYCVSLDGKN). The tract at residues 351–450 (EAQRENLELP…QGAKPDLSNP (100 aa)) is disordered. The segment covering 363-382 (SNQEGAAAAEESSSLANSAQ) has biased composition (low complexity). Positions 386-413 (SSKEDRKKDQEGEDRDAASVRTGKCQEK) are enriched in basic and acidic residues. An RING-type 2 zinc finger spans residues 461-499 (CSLCMRLFYEPVTTPCGHTFCLKCLERCLDHNAKCPLCK). The region spanning 540-749 (MEELSNLNKN…GIRRILAFIS (210 aa)) is the Lon N-terminal domain.

The chain is LON peptidase N-terminal domain and RING finger protein 3 (Lonrf3) from Mus musculus (Mouse).